The primary structure comprises 626 residues: Phosphomethylpyrimidine synthase (626 aa).

Residues asparagine 237, methionine 266, tyrosine 295, histidine 331, serine 351–glycine 353, aspartate 392–arginine 395, and glutamate 431 contribute to the substrate site. Zn(2+) is bound at residue histidine 435. Position 458 (tyrosine 458) interacts with substrate. Histidine 499 is a binding site for Zn(2+). [4Fe-4S] cluster is bound by residues cysteine 579, cysteine 582, and cysteine 587.

It belongs to the ThiC family. In terms of assembly, homodimer. It depends on [4Fe-4S] cluster as a cofactor.

It catalyses the reaction 5-amino-1-(5-phospho-beta-D-ribosyl)imidazole + S-adenosyl-L-methionine = 4-amino-2-methyl-5-(phosphooxymethyl)pyrimidine + CO + 5'-deoxyadenosine + formate + L-methionine + 3 H(+). Its pathway is cofactor biosynthesis; thiamine diphosphate biosynthesis. In terms of biological role, catalyzes the synthesis of the hydroxymethylpyrimidine phosphate (HMP-P) moiety of thiamine from aminoimidazole ribotide (AIR) in a radical S-adenosyl-L-methionine (SAM)-dependent reaction. The chain is Phosphomethylpyrimidine synthase from Cupriavidus necator (strain ATCC 17699 / DSM 428 / KCTC 22496 / NCIMB 10442 / H16 / Stanier 337) (Ralstonia eutropha).